A 208-amino-acid chain; its full sequence is Small ribosomal subunit protein uS4 (208 aa).

The S4 RNA-binding domain occupies 98–164 (SRLDNVVYRM…DRIKFALELA (67 aa)).

This sequence belongs to the universal ribosomal protein uS4 family. As to quaternary structure, part of the 30S ribosomal subunit. Contacts protein S5. The interaction surface between S4 and S5 is involved in control of translational fidelity.

One of the primary rRNA binding proteins, it binds directly to 16S rRNA where it nucleates assembly of the body of the 30S subunit. Its function is as follows. With S5 and S12 plays an important role in translational accuracy. In Nitrosococcus oceani (strain ATCC 19707 / BCRC 17464 / JCM 30415 / NCIMB 11848 / C-107), this protein is Small ribosomal subunit protein uS4.